A 298-amino-acid chain; its full sequence is 4-hydroxy-tetrahydrodipicolinate synthase (298 aa).

Residue Thr51 participates in pyruvate binding. Tyr140 (proton donor/acceptor) is an active-site residue. Lys168 acts as the Schiff-base intermediate with substrate in catalysis. Residue Ile210 coordinates pyruvate.

Belongs to the DapA family. In terms of assembly, homotetramer; dimer of dimers.

Its subcellular location is the cytoplasm. It carries out the reaction L-aspartate 4-semialdehyde + pyruvate = (2S,4S)-4-hydroxy-2,3,4,5-tetrahydrodipicolinate + H2O + H(+). It participates in amino-acid biosynthesis; L-lysine biosynthesis via DAP pathway; (S)-tetrahydrodipicolinate from L-aspartate: step 3/4. Catalyzes the condensation of (S)-aspartate-beta-semialdehyde [(S)-ASA] and pyruvate to 4-hydroxy-tetrahydrodipicolinate (HTPA). The polypeptide is 4-hydroxy-tetrahydrodipicolinate synthase (Acidovorax sp. (strain JS42)).